The sequence spans 154 residues: uncharacterized protein (154 aa).

Residue Ser-47 is modified to Phosphoserine.

The protein to yeast YPL229w.

This is an uncharacterized protein from Saccharomyces cerevisiae (strain ATCC 204508 / S288c) (Baker's yeast).